The sequence spans 475 residues: UDP-N-acetylmuramate--L-alanine ligase (475 aa).

G112 to T118 serves as a coordination point for ATP.

This sequence belongs to the MurCDEF family.

It localises to the cytoplasm. It carries out the reaction UDP-N-acetyl-alpha-D-muramate + L-alanine + ATP = UDP-N-acetyl-alpha-D-muramoyl-L-alanine + ADP + phosphate + H(+). The protein operates within cell wall biogenesis; peptidoglycan biosynthesis. Its function is as follows. Cell wall formation. This is UDP-N-acetylmuramate--L-alanine ligase from Methylobacillus flagellatus (strain ATCC 51484 / DSM 6875 / VKM B-1610 / KT).